Consider the following 399-residue polypeptide: Putative glutamate--cysteine ligase 2 (399 aa).

The tract at residues 377–399 (PAVGSSHGRTDPSRNGGPSHAGA) is disordered.

The protein belongs to the glutamate--cysteine ligase type 2 family. YbdK subfamily.

It carries out the reaction L-cysteine + L-glutamate + ATP = gamma-L-glutamyl-L-cysteine + ADP + phosphate + H(+). In terms of biological role, ATP-dependent carboxylate-amine ligase which exhibits weak glutamate--cysteine ligase activity. This Thermobifida fusca (strain YX) protein is Putative glutamate--cysteine ligase 2.